We begin with the raw amino-acid sequence, 215 residues long: RxLR effector protein PITG_00582 (215 aa).

Positions 1–19 (MLPYKTLLLALGFFFTVQC) are cleaved as a signal peptide. The RxLR-dEER signature appears at 39–51 (RLLRSPEKTDEER). Residues 81-149 (VAKQAKEMSN…QNELEKLAKQ (69 aa)) adopt a coiled-coil conformation.

This sequence belongs to the RxLR effector family.

Its subcellular location is the secreted. It is found in the host cell membrane. Functionally, effector that might be involved in host plant infection. This chain is RxLR effector protein PITG_00582, found in Phytophthora infestans (strain T30-4) (Potato late blight agent).